Here is a 607-residue protein sequence, read N- to C-terminus: Glycerophosphodiester phosphodiesterase domain-containing protein 5 (607 aa).

The Cytoplasmic portion of the chain corresponds to methionine 1–arginine 42. 2 disulfide bridges follow: cysteine 15-cysteine 18 and cysteine 25-cysteine 571. A helical membrane pass occupies residues leucine 43–tryptophan 63. Residues glycine 64–proline 89 are Extracellular-facing. A helical transmembrane segment spans residues isoleucine 90–cysteine 110. The Cytoplasmic segment spans residues histidine 111–lysine 125. The chain crosses the membrane as a helical span at residues methionine 126–tryptophan 146. Residues glutamate 147 to threonine 160 lie on the Extracellular side of the membrane. Residues alanine 161–glycine 181 form a helical membrane-spanning segment. The Cytoplasmic portion of the chain corresponds to glutamine 182–glutamine 192. Residues leucine 193–isoleucine 213 form a helical membrane-spanning segment. The Extracellular portion of the chain corresponds to serine 214–tyrosine 496. Residues proline 228–proline 485 form the GP-PDE domain. Residues asparagine 301, asparagine 336, asparagine 352, asparagine 374, and asparagine 448 are each glycosylated (N-linked (GlcNAc...) asparagine). A helical transmembrane segment spans residues cysteine 497–leucine 517. Over glutamine 518–histidine 607 the chain is Cytoplasmic. Residues alanine 582–histidine 607 are disordered.

Belongs to the glycerophosphoryl diester phosphodiesterase family. Interacts with PRDX1; forms a mixed-disulfide with PRDX1, leading to disrupt intramolecular disulfide bond between Cys-25 and Cys-571. Post-translationally, intramolecular disulfide bond between Cys-25 and Cys-571 is reduced by PRDX1. In terms of tissue distribution, detected in brain, lung, heart, kidney and testis.

Its subcellular location is the endomembrane system. It is found in the cytoplasm. It localises to the perinuclear region. The protein resides in the cell projection. The protein localises to the growth cone. The catalysed reaction is a 1,2-diacyl-sn-glycero-3-phospho-(1D-myo-inositol-4,5-bisphosphate) + H2O = 1D-myo-inositol 1,4,5-trisphosphate + a 1,2-diacyl-sn-glycerol + H(+). The enzyme catalyses sn-glycerol 3-phosphocholine + H2O = sn-glycerol 3-phosphate + choline + H(+). With respect to regulation, inhibited by high level of NaCl or urea. In terms of biological role, glycerophosphodiester phosphodiesterase that promotes neurite formation and drives spinal motor neuron differentiation. Mediates the cleavage of glycosylphosphatidylinositol (GPI) anchor of target proteins: removes the GPI-anchor of RECK, leading to release RECK from the plasma membrane. May contribute to the osmotic regulation of cellular glycerophosphocholine. This Mus musculus (Mouse) protein is Glycerophosphodiester phosphodiesterase domain-containing protein 5.